Here is an 805-residue protein sequence, read N- to C-terminus: N-(5-amino-5-carboxypentanoyl)-L-cysteinyl-D-valine synthase (805 aa).

A disordered region spans residues 783–805 (PDTGGGAVGSTTTGGVRGELREI).

It belongs to the ATP-dependent AMP-binding enzyme family. Requires pantetheine 4'-phosphate as cofactor.

The catalysed reaction is L-2-aminoadipate + L-valine + L-cysteine + 3 ATP + H2O = N-[(5S)-5-amino-5-carboxypentanoyl]-L-cysteinyl-D-valine + 3 AMP + 3 diphosphate + 3 H(+). It functions in the pathway antibiotic biosynthesis; penicillin G biosynthesis; penicillin G from L-alpha-aminoadipate and L-cysteine and L-valine: step 1/3. Its function is as follows. Each of the constituent amino acids of ACV are activated as aminoacyl-adenylates with peptide bonds formed through the participation of amino acid thioester intermediates. In Streptomyces clavuligerus, this protein is N-(5-amino-5-carboxypentanoyl)-L-cysteinyl-D-valine synthase (pcbAB).